The primary structure comprises 676 residues: RNA helicase NPH-II (676 aa).

The Helicase ATP-binding domain maps to 172–347 (FSAWISHRPV…VFLPNPAFIH (176 aa)). 185 to 192 (GGTGVGKT) serves as a coordination point for ATP. The DEXH box motif lies at 296-299 (DEVH). The region spanning 366–535 (NPSSRMAYIE…NYILYANKFN (170 aa)) is the Helicase C-terminal domain.

Belongs to the DEAD box helicase family. DEAH subfamily. In terms of assembly, monomer.

Its subcellular location is the virion. It catalyses the reaction ATP + H2O = ADP + phosphate + H(+). Functionally, NTP-dependent helicase that catalyzes unidirectional unwinding of 3'tailed duplex RNAs and plays an important role during transcription of early mRNAs, presumably by preventing R-loop formation behind the elongating RNA polymerase. Might also play a role in the export of newly synthesized mRNA chains out of the core into the cytoplasm. Required for replication and propagation of viral particles. This Vaccinia virus (strain Ankara) (VACV) protein is RNA helicase NPH-II (OPG084).